A 427-amino-acid polypeptide reads, in one-letter code: Glutamate-1-semialdehyde 2,1-aminomutase 1 (427 aa).

Lysine 267 carries the post-translational modification N6-(pyridoxal phosphate)lysine.

The protein belongs to the class-III pyridoxal-phosphate-dependent aminotransferase family. HemL subfamily. As to quaternary structure, homodimer. Pyridoxal 5'-phosphate is required as a cofactor.

The protein resides in the cytoplasm. The catalysed reaction is (S)-4-amino-5-oxopentanoate = 5-aminolevulinate. Its pathway is porphyrin-containing compound metabolism; protoporphyrin-IX biosynthesis; 5-aminolevulinate from L-glutamyl-tRNA(Glu): step 2/2. The sequence is that of Glutamate-1-semialdehyde 2,1-aminomutase 1 from Staphylococcus epidermidis (strain ATCC 35984 / DSM 28319 / BCRC 17069 / CCUG 31568 / BM 3577 / RP62A).